A 103-amino-acid polypeptide reads, in one-letter code: NADH-quinone oxidoreductase subunit K (103 aa).

The next 3 membrane-spanning stretches (helical) occupy residues 5 to 25 (ISSY…GALT), 30 to 50 (VVVL…LVAF), and 66 to 86 (LFTM…LIAL).

The protein belongs to the complex I subunit 4L family. NDH-1 is composed of 14 different subunits. Subunits NuoA, H, J, K, L, M, N constitute the membrane sector of the complex.

It is found in the cell membrane. It carries out the reaction a quinone + NADH + 5 H(+)(in) = a quinol + NAD(+) + 4 H(+)(out). Functionally, NDH-1 shuttles electrons from NADH, via FMN and iron-sulfur (Fe-S) centers, to quinones in the respiratory chain. The immediate electron acceptor for the enzyme in this species is believed to be a menaquinone. Couples the redox reaction to proton translocation (for every two electrons transferred, four hydrogen ions are translocated across the cytoplasmic membrane), and thus conserves the redox energy in a proton gradient. This chain is NADH-quinone oxidoreductase subunit K, found in Brevibacillus brevis (strain 47 / JCM 6285 / NBRC 100599).